The sequence spans 96 residues: MATPQRLTDPEIQTALGELGGWSLQGNKLHRQFKFANFNQAFGFMTRLALVAETLNHHPEWSNVYNRVTIDLTTHDAGGITELDVKFATKANSFAD.

The protein belongs to the pterin-4-alpha-carbinolamine dehydratase family.

It catalyses the reaction (4aS,6R)-4a-hydroxy-L-erythro-5,6,7,8-tetrahydrobiopterin = (6R)-L-erythro-6,7-dihydrobiopterin + H2O. This chain is Putative pterin-4-alpha-carbinolamine dehydratase, found in Synechocystis sp. (strain ATCC 27184 / PCC 6803 / Kazusa).